The chain runs to 512 residues: D-alanine--D-alanyl carrier protein ligase (512 aa).

152–153 (TS) serves as a coordination point for ATP. Position 199 (D199) interacts with D-alanine. Residue 294–299 (NAYGPT) coordinates ATP. V303 contributes to the D-alanine binding site. Residues D385, 397–400 (YGGR), and K499 each bind ATP. Residue K499 coordinates D-alanine.

This sequence belongs to the ATP-dependent AMP-binding enzyme family. DltA subfamily.

The protein resides in the cytoplasm. It catalyses the reaction holo-[D-alanyl-carrier protein] + D-alanine + ATP = D-alanyl-[D-alanyl-carrier protein] + AMP + diphosphate. Its pathway is cell wall biogenesis; lipoteichoic acid biosynthesis. In terms of biological role, catalyzes the first step in the D-alanylation of lipoteichoic acid (LTA), the activation of D-alanine and its transfer onto the D-alanyl carrier protein (Dcp) DltC. In an ATP-dependent two-step reaction, forms a high energy D-alanyl-AMP intermediate, followed by transfer of the D-alanyl residue as a thiol ester to the phosphopantheinyl prosthetic group of the Dcp. D-alanylation of LTA plays an important role in modulating the properties of the cell wall in Gram-positive bacteria, influencing the net charge of the cell wall. The polypeptide is D-alanine--D-alanyl carrier protein ligase (Streptococcus pyogenes serotype M1).